A 386-amino-acid polypeptide reads, in one-letter code: N-acetylneuraminate epimerase (386 aa).

An N-terminal signal peptide occupies residues 1-29; it reads MGMQMKNSKKMMTLMALCLSVAITTSGYA. Kelch repeat units follow at residues 51–95, 97–149, 151–186, 187–232, 235–284, 306–355, and 357–386; these read VIYV…VFLN, ELYV…VKLN, TMAL…RVIY, NYFN…AMEN, LTLI…LAGA, QNYT…NYGD, and IFLI…LLIE. Glutamate 241 acts as the Proton acceptor in catalysis.

This sequence belongs to the NanM family. As to quaternary structure, homodimer.

The protein resides in the periplasm. It catalyses the reaction N-acetyl-alpha-neuraminate = N-acetyl-beta-neuraminate. Converts alpha-N-acetylneuranimic acid (Neu5Ac) to the beta-anomer, accelerating the equilibrium between the alpha- and beta-anomers. Probably facilitates sialidase-negative bacteria to compete successfully for limited amounts of extracellular Neu5Ac, which is likely taken up in the beta-anomer. In addition, the rapid removal of sialic acid from solution might be advantageous to the bacterium to damp down host responses. The chain is N-acetylneuraminate epimerase from Salmonella arizonae (strain ATCC BAA-731 / CDC346-86 / RSK2980).